Here is a 336-residue protein sequence, read N- to C-terminus: Dihydroorotate dehydrogenase (quinone) (336 aa).

FMN contacts are provided by residues 62–66 (AGLDK) and Thr86. Lys66 lines the substrate pocket. 111–115 (NRMGF) is a substrate binding site. FMN contacts are provided by Asn139 and Asn172. Asn172 contacts substrate. The active-site Nucleophile is the Ser175. A substrate-binding site is contributed by Asn177. 2 residues coordinate FMN: Lys217 and Thr245. 246–247 (NT) provides a ligand contact to substrate. FMN contacts are provided by residues Gly268, Gly297, and 318–319 (YS).

This sequence belongs to the dihydroorotate dehydrogenase family. Type 2 subfamily. As to quaternary structure, monomer. FMN serves as cofactor.

It localises to the cell membrane. The enzyme catalyses (S)-dihydroorotate + a quinone = orotate + a quinol. Its pathway is pyrimidine metabolism; UMP biosynthesis via de novo pathway; orotate from (S)-dihydroorotate (quinone route): step 1/1. Catalyzes the conversion of dihydroorotate to orotate with quinone as electron acceptor. The polypeptide is Dihydroorotate dehydrogenase (quinone) (Serratia proteamaculans (strain 568)).